The following is a 311-amino-acid chain: Probable manganese-dependent inorganic pyrophosphatase (311 aa).

His9, Asp13, Asp15, Asp75, His97, and Asp149 together coordinate Mn(2+).

Belongs to the PPase class C family. The cofactor is Mn(2+).

Its subcellular location is the cytoplasm. It carries out the reaction diphosphate + H2O = 2 phosphate + H(+). In Lactobacillus helveticus (strain DPC 4571), this protein is Probable manganese-dependent inorganic pyrophosphatase.